The chain runs to 273 residues: MAGYISGDTRKVTTHRLVEMKQRGEKISMLTSYDYTTAQIVDGAGIDVILVGDSASNVMAGNVTTLPITLDQMIYHGKSVVRGVKRALVVVDLPFGTYQTSEYEAVTNAIKVMKITHADALKLEGGVEIIDAVKKIIAAGIPIMGHLGLMPQSINKYGTYTVRAKDEEEAEKLLSDAHLLEETGCFALVLEKIPASLAERVARELTIPVIGIGAGGAVDGQVLVVSDMLGMTNGFSPRFLRRYADLHTVMTGAIQQYVDDVKKGDFPNEDEQY.

2 residues coordinate Mg(2+): aspartate 53 and aspartate 92. Residues 53–54 (DS), aspartate 92, and lysine 122 contribute to the 3-methyl-2-oxobutanoate site. Mg(2+) is bound at residue glutamate 124. The active-site Proton acceptor is the glutamate 191.

The protein belongs to the PanB family. As to quaternary structure, homodecamer; pentamer of dimers. The cofactor is Mg(2+).

It is found in the cytoplasm. It carries out the reaction 3-methyl-2-oxobutanoate + (6R)-5,10-methylene-5,6,7,8-tetrahydrofolate + H2O = 2-dehydropantoate + (6S)-5,6,7,8-tetrahydrofolate. It participates in cofactor biosynthesis; (R)-pantothenate biosynthesis; (R)-pantoate from 3-methyl-2-oxobutanoate: step 1/2. Its function is as follows. Catalyzes the reversible reaction in which hydroxymethyl group from 5,10-methylenetetrahydrofolate is transferred onto alpha-ketoisovalerate to form ketopantoate. This is 3-methyl-2-oxobutanoate hydroxymethyltransferase from Phocaeicola vulgatus (strain ATCC 8482 / DSM 1447 / JCM 5826 / CCUG 4940 / NBRC 14291 / NCTC 11154) (Bacteroides vulgatus).